Consider the following 115-residue polypeptide: Peptidyl-tRNA hydrolase (115 aa).

It belongs to the PTH2 family.

The protein resides in the cytoplasm. It carries out the reaction an N-acyl-L-alpha-aminoacyl-tRNA + H2O = an N-acyl-L-amino acid + a tRNA + H(+). Functionally, the natural substrate for this enzyme may be peptidyl-tRNAs which drop off the ribosome during protein synthesis. The chain is Peptidyl-tRNA hydrolase from Archaeoglobus fulgidus (strain ATCC 49558 / DSM 4304 / JCM 9628 / NBRC 100126 / VC-16).